Here is a 240-residue protein sequence, read N- to C-terminus: UDP-2,3-diacylglucosamine hydrolase (240 aa).

Asp8, His10, Asp41, Asn79, and His114 together coordinate Mn(2+). Substrate is bound at residue 79 to 80 (NR). Asp122, Ser160, Asn164, Lys167, and His195 together coordinate substrate. 2 residues coordinate Mn(2+): His195 and His197.

This sequence belongs to the LpxH family. Mn(2+) serves as cofactor.

It is found in the cell inner membrane. The enzyme catalyses UDP-2-N,3-O-bis[(3R)-3-hydroxytetradecanoyl]-alpha-D-glucosamine + H2O = 2-N,3-O-bis[(3R)-3-hydroxytetradecanoyl]-alpha-D-glucosaminyl 1-phosphate + UMP + 2 H(+). It participates in glycolipid biosynthesis; lipid IV(A) biosynthesis; lipid IV(A) from (3R)-3-hydroxytetradecanoyl-[acyl-carrier-protein] and UDP-N-acetyl-alpha-D-glucosamine: step 4/6. Hydrolyzes the pyrophosphate bond of UDP-2,3-diacylglucosamine to yield 2,3-diacylglucosamine 1-phosphate (lipid X) and UMP by catalyzing the attack of water at the alpha-P atom. Involved in the biosynthesis of lipid A, a phosphorylated glycolipid that anchors the lipopolysaccharide to the outer membrane of the cell. The chain is UDP-2,3-diacylglucosamine hydrolase from Cellvibrio japonicus (strain Ueda107) (Pseudomonas fluorescens subsp. cellulosa).